The following is a 66-amino-acid chain: Large ribosomal subunit protein bL33c (66 aa).

The protein belongs to the bacterial ribosomal protein bL33 family.

It localises to the plastid. It is found in the chloroplast. The sequence is that of Large ribosomal subunit protein bL33c from Manihot esculenta (Cassava).